The sequence spans 123 residues: Venom protein 29 (123 aa).

A signal peptide spans 1–18 (MNKLFLFTLLVTLWSVKG).

In terms of processing, contains 3 disulfide bonds. Expressed by the venom gland.

Its subcellular location is the secreted. The sequence is that of Venom protein 29 from Lychas mucronatus (Chinese swimming scorpion).